We begin with the raw amino-acid sequence, 461 residues long: UPF0210 protein Ddes_0622 (461 aa).

This sequence belongs to the UPF0210 family. Homodimer.

The sequence is that of UPF0210 protein Ddes_0622 from Desulfovibrio desulfuricans (strain ATCC 27774 / DSM 6949 / MB).